Consider the following 95-residue polypeptide: Osteocalcin-related protein (95 aa).

Positions 1–23 (MRTLSLLTLLALAALCLSDLTDA) are cleaved as a signal peptide. Residues 24-49 (TPTGPESDKAFMSKQEGNKVVNRLRR) constitute a propeptide that is removed on maturation. The region spanning 46–92 (RLRRYLGASVPSPDPLEPTRELCELDPACDELSNQYGLKTAYRRIYG) is the Gla domain. Ca(2+)-binding residues include Glu62, Glu66, Glu69, and Asp75. Glu66 and Glu69 each carry 4-carboxyglutamate. A disulfide bridge connects residues Cys68 and Cys74.

Belongs to the osteocalcin/matrix Gla protein family. In terms of processing, gamma-carboxyglutamic acid residues are formed by vitamin K dependent carboxylation. These residues are essential for the binding of calcium. Expressed in kidney and lung, but not in bone.

The protein resides in the secreted. In terms of biological role, binds strongly to apatite and calcium. This is Osteocalcin-related protein from Mus musculus (Mouse).